The following is a 95-amino-acid chain: Cliotide T1 (95 aa).

A cross-link (cyclopeptide (Gly-Asn)) is located at residues Gly1–Asn30. Intrachain disulfides connect Cys4–Cys20, Cys8–Cys22, and Cys13–Cys27. Residues His31–Asn95 constitute a propeptide, removed in mature form.

In terms of processing, contains 3 disulfide bonds. This is a cyclic peptide. Expressed in flower, stem, shoot, root, leaf, seed, pod and nodule (at protein level).

Probably participates in a plant defense mechanism. Active against Gram-negative bacteria E.coli ATCC 700926 (MIC=1.1 uM), K.pneumoniae ATTC 13883 (MIC=2.7 uM) and P.aeruginosa ATCC 39018 (MIC=4.7 uM). Has hemolytic and cytotoxic activity. This Clitoria ternatea (Butterfly pea) protein is Cliotide T1.